A 554-amino-acid chain; its full sequence is Glutamine--tRNA ligase (554 aa).

Residues 34–44 (PEPNGYLHIGH) carry the 'HIGH' region motif. Residues 35-37 (EPN) and 41-47 (HIGHAKS) contribute to the ATP site. D67 and Y212 together coordinate L-glutamine. Residues T231, 261 to 262 (RL), and 269 to 271 (MSK) each bind ATP. Residues 268–272 (VMSKR) carry the 'KMSKS' region motif. The segment at 317–324 (TKQDNTIE) is interaction with tRNA.

The protein belongs to the class-I aminoacyl-tRNA synthetase family. Monomer.

It is found in the cytoplasm. It catalyses the reaction tRNA(Gln) + L-glutamine + ATP = L-glutaminyl-tRNA(Gln) + AMP + diphosphate. The sequence is that of Glutamine--tRNA ligase from Escherichia coli (strain 55989 / EAEC).